A 1318-amino-acid polypeptide reads, in one-letter code: Ubiquitin carboxyl-terminal hydrolase 19 (1318 aa).

The disordered stretch occupies residues 1 to 109; it reads MSGGASATGP…GACEDPHDLL (109 aa). Over 1 to 1291 the chain is Cytoplasmic; it reads MSGGASATGP…TTPDEGCLRY (1291 aa). Residues 28-44 show a composition bias toward basic and acidic residues; sequence DRANQESKDGDPRKETG. Positions 83 to 94 are enriched in polar residues; that stretch reads PSSSGSASTPQE. Positions 95 to 107 are enriched in basic and acidic residues; it reads EQTKEGACEDPHD. Positions 113–202 constitute a CS 1 domain; that stretch reads TPELLLDWRQ…VPMLTWPSLL (90 aa). The tract at residues 234–255 is disordered; sequence KAVPPGNDPVSPAMVRSRNPGK. Position 244 is a phosphoserine (serine 244). The region spanning 282-384 is the CS 2 domain; it reads LAFVKNDSYE…RQSQRWGGLE (103 aa). The disordered stretch occupies residues 390 to 479; that stretch reads VGGAKVAVPT…PMPHSPVSGD (90 aa). 2 stretches are compositionally biased toward basic and acidic residues: residues 420–436 and 447–457; these read EEARAVEKDKSKARSED and PMEHVTPKPET. The USP domain occupies 497-1214; it reads TGLVNLGNTC…YAYVLFYRRR (718 aa). Cysteine 506 functions as the Nucleophile in the catalytic mechanism. Zn(2+) is bound by residues cysteine 791, cysteine 794, cysteine 808, cysteine 811, cysteine 817, cysteine 821, histidine 829, and cysteine 833. The MYND-type zinc-finger motif lies at 791–833; it reads CAACQRKQQSEDEKLKRCTRCYRVGYCNQLCQKTHWPDHKGLC. Catalysis depends on histidine 1165, which acts as the Proton acceptor. Basic and acidic residues predominate over residues 1218–1232; that stretch reads VERPPRAGHSEHHPD. Residues 1218 to 1239 are disordered; sequence VERPPRAGHSEHHPDLGPAAEA. The helical transmembrane segment at 1292-1312 threads the bilayer; it reads FVLGTVAALVALVLNVFYPLV. Topologically, residues 1313–1318 are lumenal; the sequence is SQSRWR.

It belongs to the peptidase C19 family. In terms of assembly, interacts with RNF123. Interacts with BIRC2/c-IAP1, BIRC3/c-IAP2 and XIAP/BIRC4. Interacts with HIF1A (via N-terminus). Interacts (via N-terminus) with HSP90AA1; this interaction activates the deubiquitinase activity of USP19.

The protein localises to the endoplasmic reticulum membrane. It carries out the reaction Thiol-dependent hydrolysis of ester, thioester, amide, peptide and isopeptide bonds formed by the C-terminal Gly of ubiquitin (a 76-residue protein attached to proteins as an intracellular targeting signal).. Functionally, deubiquitinating enzyme that regulates the degradation of various proteins by removing ubiquitin moieties, thereby preventing their proteasomal degradation. Stabilizes RNF123, which promotes CDKN1B degradation and contributes to cell proliferation. Decreases the levels of ubiquitinated proteins during skeletal muscle formation and acts to repress myogenesis. Modulates transcription of major myofibrillar proteins. Also involved in turnover of endoplasmic-reticulum-associated degradation (ERAD) substrates. Mechanistically, deubiquitinates and thereby stabilizes several E3 ligases involved in the ERAD pathway including SYVN1 or MARCHF6. Regulates the stability of other E3 ligases including BIRC2/c-IAP1 and BIRC3/c-IAP2 by preventing their ubiquitination. Required for cells to mount an appropriate response to hypoxia by rescuing HIF1A from degradation in a non-catalytic manner and by mediating the deubiquitination of FUNDC1. Attenuates mitochondrial damage and ferroptosis by targeting and stabilizing NADPH oxidase 4/NOX4. Negatively regulates TNF-alpha- and IL-1beta-triggered NF-kappa-B activation by hydrolyzing 'Lys-27'- and 'Lys-63'-linked polyubiquitin chains from MAP3K7. Modulates also the protein level and aggregation of polyQ-expanded huntingtin/HTT through HSP90AA1. The sequence is that of Ubiquitin carboxyl-terminal hydrolase 19 (USP19) from Homo sapiens (Human).